The sequence spans 550 residues: Hydroxylamine reductase (550 aa).

The [2Fe-2S] cluster site is built by Cys3, Cys6, Cys18, and Cys25. Positions 249, 273, 317, 405, 433, 458, 492, and 494 each coordinate hybrid [4Fe-2O-2S] cluster. At Cys405 the chain carries Cysteine persulfide.

This sequence belongs to the HCP family. [2Fe-2S] cluster is required as a cofactor. Requires hybrid [4Fe-2O-2S] cluster as cofactor.

The protein localises to the cytoplasm. It catalyses the reaction A + NH4(+) + H2O = hydroxylamine + AH2 + H(+). Catalyzes the reduction of hydroxylamine to form NH(3) and H(2)O. This chain is Hydroxylamine reductase, found in Enterobacter sp. (strain 638).